Reading from the N-terminus, the 164-residue chain is Transcription elongation factor GreA (164 aa).

The stretch at Glu-11 to Val-76 forms a coiled coil.

This sequence belongs to the GreA/GreB family.

In terms of biological role, necessary for efficient RNA polymerase transcription elongation past template-encoded arresting sites. The arresting sites in DNA have the property of trapping a certain fraction of elongating RNA polymerases that pass through, resulting in locked ternary complexes. Cleavage of the nascent transcript by cleavage factors such as GreA or GreB allows the resumption of elongation from the new 3'terminus. GreA releases sequences of 2 to 3 nucleotides. This Mycolicibacterium vanbaalenii (strain DSM 7251 / JCM 13017 / BCRC 16820 / KCTC 9966 / NRRL B-24157 / PYR-1) (Mycobacterium vanbaalenii) protein is Transcription elongation factor GreA.